The primary structure comprises 188 residues: Peptidyl-tRNA hydrolase (188 aa).

Residue tyrosine 15 coordinates tRNA. The active-site Proton acceptor is the histidine 20. TRNA-binding residues include phenylalanine 66, asparagine 68, and asparagine 114.

It belongs to the PTH family. In terms of assembly, monomer.

The protein resides in the cytoplasm. It carries out the reaction an N-acyl-L-alpha-aminoacyl-tRNA + H2O = an N-acyl-L-amino acid + a tRNA + H(+). Its function is as follows. Hydrolyzes ribosome-free peptidyl-tRNAs (with 1 or more amino acids incorporated), which drop off the ribosome during protein synthesis, or as a result of ribosome stalling. Catalyzes the release of premature peptidyl moieties from peptidyl-tRNA molecules trapped in stalled 50S ribosomal subunits, and thus maintains levels of free tRNAs and 50S ribosomes. This chain is Peptidyl-tRNA hydrolase, found in Lactococcus lactis subsp. lactis (strain IL1403) (Streptococcus lactis).